We begin with the raw amino-acid sequence, 472 residues long: 3-isopropylmalate dehydratase large subunit (472 aa).

C350, C411, and C414 together coordinate [4Fe-4S] cluster.

It belongs to the aconitase/IPM isomerase family. LeuC type 1 subfamily. As to quaternary structure, heterodimer of LeuC and LeuD. It depends on [4Fe-4S] cluster as a cofactor.

It catalyses the reaction (2R,3S)-3-isopropylmalate = (2S)-2-isopropylmalate. The protein operates within amino-acid biosynthesis; L-leucine biosynthesis; L-leucine from 3-methyl-2-oxobutanoate: step 2/4. Functionally, catalyzes the isomerization between 2-isopropylmalate and 3-isopropylmalate, via the formation of 2-isopropylmaleate. This is 3-isopropylmalate dehydratase large subunit from Alcanivorax borkumensis (strain ATCC 700651 / DSM 11573 / NCIMB 13689 / SK2).